Here is a 255-residue protein sequence, read N- to C-terminus: Acetylglutamate kinase (255 aa).

Substrate-binding positions include 40-41 (GG), Arg-62, and Asn-153.

Belongs to the acetylglutamate kinase family. ArgB subfamily.

The protein localises to the cytoplasm. The enzyme catalyses N-acetyl-L-glutamate + ATP = N-acetyl-L-glutamyl 5-phosphate + ADP. It participates in amino-acid biosynthesis; L-arginine biosynthesis; N(2)-acetyl-L-ornithine from L-glutamate: step 2/4. In terms of biological role, catalyzes the ATP-dependent phosphorylation of N-acetyl-L-glutamate. The polypeptide is Acetylglutamate kinase (Bacillus mycoides (strain KBAB4) (Bacillus weihenstephanensis)).